The primary structure comprises 360 residues: Glutamate 5-kinase (360 aa).

Lys7 lines the ATP pocket. Positions 47, 134, and 146 each coordinate substrate. Residues 166–167 (TD) and 210–216 (TGGISTK) each bind ATP. The PUA domain maps to 275-356 (VGKITLDDGA…SSIIVVHRDV (82 aa)).

The protein belongs to the glutamate 5-kinase family.

The protein resides in the cytoplasm. The enzyme catalyses L-glutamate + ATP = L-glutamyl 5-phosphate + ADP. It participates in amino-acid biosynthesis; L-proline biosynthesis; L-glutamate 5-semialdehyde from L-glutamate: step 1/2. Its function is as follows. Catalyzes the transfer of a phosphate group to glutamate to form L-glutamate 5-phosphate. This Prochlorococcus marinus (strain MIT 9312) protein is Glutamate 5-kinase.